A 418-amino-acid chain; its full sequence is Gamma-glutamyl phosphate reductase (418 aa).

It belongs to the gamma-glutamyl phosphate reductase family.

It is found in the cytoplasm. It carries out the reaction L-glutamate 5-semialdehyde + phosphate + NADP(+) = L-glutamyl 5-phosphate + NADPH + H(+). It functions in the pathway amino-acid biosynthesis; L-proline biosynthesis; L-glutamate 5-semialdehyde from L-glutamate: step 2/2. Catalyzes the NADPH-dependent reduction of L-glutamate 5-phosphate into L-glutamate 5-semialdehyde and phosphate. The product spontaneously undergoes cyclization to form 1-pyrroline-5-carboxylate. The chain is Gamma-glutamyl phosphate reductase from Halothermothrix orenii (strain H 168 / OCM 544 / DSM 9562).